Consider the following 252-residue polypeptide: Triosephosphate isomerase (252 aa).

10 to 12 (NWK) provides a ligand contact to substrate. Catalysis depends on His-96, which acts as the Electrophile. Glu-168 (proton acceptor) is an active-site residue. Substrate is bound by residues Gly-174, Ser-213, and 234–235 (GG).

It belongs to the triosephosphate isomerase family. Homodimer.

It is found in the cytoplasm. It catalyses the reaction D-glyceraldehyde 3-phosphate = dihydroxyacetone phosphate. The protein operates within carbohydrate biosynthesis; gluconeogenesis. It participates in carbohydrate degradation; glycolysis; D-glyceraldehyde 3-phosphate from glycerone phosphate: step 1/1. In terms of biological role, involved in the gluconeogenesis. Catalyzes stereospecifically the conversion of dihydroxyacetone phosphate (DHAP) to D-glyceraldehyde-3-phosphate (G3P). The chain is Triosephosphate isomerase from Idiomarina loihiensis (strain ATCC BAA-735 / DSM 15497 / L2-TR).